The primary structure comprises 346 residues: Flap endonuclease 1 (346 aa).

Residues 1 to 102 (MGVTELGKLI…AEIEERRKTR (102 aa)) are N-domain. The Mg(2+) site is built by Asp-31, Asp-84, Glu-156, Glu-158, Asp-177, Asp-179, and Asp-239. The I-domain stretch occupies residues 120 to 261 (DVAKYAKRAV…KALKLIWEFG (142 aa)).

Belongs to the XPG/RAD2 endonuclease family. FEN1 subfamily. Interacts with PCNA. PCNA stimulates the nuclease activity without altering cleavage specificity. Requires Mg(2+) as cofactor.

In terms of biological role, structure-specific nuclease with 5'-flap endonuclease and 5'-3' exonuclease activities involved in DNA replication and repair. During DNA replication, cleaves the 5'-overhanging flap structure that is generated by displacement synthesis when DNA polymerase encounters the 5'-end of a downstream Okazaki fragment. Binds the unpaired 3'-DNA end and kinks the DNA to facilitate 5' cleavage specificity. Cleaves one nucleotide into the double-stranded DNA from the junction in flap DNA, leaving a nick for ligation. Also involved in the base excision repair (BER) pathway. Acts as a genome stabilization factor that prevents flaps from equilibrating into structures that lead to duplications and deletions. Also possesses 5'-3' exonuclease activity on nicked or gapped double-stranded DNA. The protein is Flap endonuclease 1 of Pyrobaculum aerophilum (strain ATCC 51768 / DSM 7523 / JCM 9630 / CIP 104966 / NBRC 100827 / IM2).